Here is a 311-residue protein sequence, read N- to C-terminus: Ribonuclease 3 (311 aa).

An RNase III domain is found at 20–145 (YLCFYRILGF…FIGAIYLDQG (126 aa)). Glutamate 62 provides a ligand contact to Mg(2+). Aspartate 66 is a catalytic residue. Mg(2+)-binding residues include asparagine 131 and glutamate 134. The active site involves glutamate 134. A DRBM domain is found at 173–242 (NFKSKLIEWS…AQMAIKKVKD (70 aa)). A disordered region spans residues 250–311 (NEAKSQHSKP…EVEATETEKE (62 aa)). The segment covering 262 to 288 (VETESVEPELTESETMEPDTLETEAPE) has biased composition (acidic residues).

Belongs to the ribonuclease III family. In terms of assembly, homodimer. Mg(2+) is required as a cofactor.

The protein localises to the cytoplasm. The catalysed reaction is Endonucleolytic cleavage to 5'-phosphomonoester.. Functionally, digests double-stranded RNA. Involved in the processing of primary rRNA transcript to yield the immediate precursors to the large and small rRNAs (23S and 16S). Processes some mRNAs, and tRNAs when they are encoded in the rRNA operon. Processes pre-crRNA and tracrRNA of type II CRISPR loci if present in the organism. This Bacteroides thetaiotaomicron (strain ATCC 29148 / DSM 2079 / JCM 5827 / CCUG 10774 / NCTC 10582 / VPI-5482 / E50) protein is Ribonuclease 3.